The chain runs to 270 residues: uncharacterized protein (270 aa).

Transmembrane regions (helical) follow at residues Ala-12–Gly-32, Thr-35–Leu-55, Thr-64–Gln-84, Val-88–Leu-108, Thr-117–Glu-137, Leu-138–Leu-158, Ile-171–Gly-191, Gly-194–Phe-214, Ala-226–Gly-246, and Thr-248–Trp-268. 2 consecutive EamA domains span residues Val-19 to Thr-133 and Leu-150 to Arg-269.

Belongs to the EamA transporter family.

The protein localises to the cell membrane. This is an uncharacterized protein from Archaeoglobus fulgidus (strain ATCC 49558 / DSM 4304 / JCM 9628 / NBRC 100126 / VC-16).